A 248-amino-acid chain; its full sequence is Inner membrane protein pE248R (248 aa).

Residue glycine 2 is the site of N-myristoyl glycine; by host attachment. Over 2–199 (GGSTSKNSFK…ADAISAVFKN (198 aa)) the chain is Cytoplasmic. The chain crosses the membrane as a helical span at residues 200-220 (IMVAAVVIVLIIVGFIAVFYF). At 221 to 248 (LHSRHRHEEEEEAEPLISNKVLKNAAVS) the chain is on the extracellular side.

It belongs to the asfivirus E248R family. Interacts with A151R.

It localises to the host membrane. The protein localises to the virion membrane. Essential for viral fusion with host endosomal membrane and core release. The chain is Inner membrane protein pE248R from Ornithodoros (relapsing fever ticks).